A 454-amino-acid polypeptide reads, in one-letter code: Cobyrinate a,c-diamide synthase (454 aa).

The 196-residue stretch at 247–442 (KIGIAMDSAF…IHAHWASNPN (196 aa)) folds into the GATase cobBQ-type domain. The active-site Nucleophile is Cys-329.

This sequence belongs to the CobB/CbiA family. The cofactor is Mg(2+).

It catalyses the reaction cob(II)yrinate + 2 L-glutamine + 2 ATP + 2 H2O = cob(II)yrinate a,c diamide + 2 L-glutamate + 2 ADP + 2 phosphate + 2 H(+). It functions in the pathway cofactor biosynthesis; adenosylcobalamin biosynthesis; cob(II)yrinate a,c-diamide from sirohydrochlorin (anaerobic route): step 10/10. Catalyzes the ATP-dependent amidation of the two carboxylate groups at positions a and c of cobyrinate, using either L-glutamine or ammonia as the nitrogen source. The chain is Cobyrinate a,c-diamide synthase from Leptospira interrogans serogroup Icterohaemorrhagiae serovar Lai (strain 56601).